A 946-amino-acid chain; its full sequence is Phosphatidylinositol 4,5-bisphosphate 5-phosphatase INP51 (946 aa).

The 330-residue stretch at 151–480 folds into the SAC domain; it reads LKKLFSDGTF…YYWLDRTYTK (330 aa). Disordered stretches follow at residues 872–902 and 927–946; these read SDSI…SDLK and PKRD…FIER. Acidic residues predominate over residues 936–946; the sequence is ENEDEPLFIER.

This sequence belongs to the synaptojanin family. In the central section; belongs to the inositol 1,4,5-trisphosphate 5-phosphatase family. In terms of assembly, interacts with IRS4 and TAX4.

The protein localises to the cytoplasm. It localises to the cytoskeleton. The protein resides in the actin patch. The catalysed reaction is a 1,2-diacyl-sn-glycero-3-phospho-(1D-myo-inositol-4,5-bisphosphate) + H2O = a 1,2-diacyl-sn-glycero-3-phospho-(1D-myo-inositol 4-phosphate) + phosphate. IRS4 and TAX4 are both positive regulator of INP51 activity and phosphatidylinositol 4,5-bisphosphate turnover. In terms of biological role, controls the cellular levels and subcellular distribution of phosphatidylinositol 4,5-bisphosphate (PtdIns(4,5)P2). Does not utilize phosphatidylinositol 3,5-bisphosphate (PtdIns(3,5)P2), nor phosphatidylinositol 3-phosphate (PtdIns(3)P) and phosphatidylinositol 4-phosphate (PtdIns(4)P). Plays an essential role in a TGN (trans Golgi network)-to-early endosome pathway. Involved in endocytosis and acts as a negative regulator of the Slm pathway which modulates polarized actin assembly and growth. The sequence is that of Phosphatidylinositol 4,5-bisphosphate 5-phosphatase INP51 (INP51) from Saccharomyces cerevisiae (strain ATCC 204508 / S288c) (Baker's yeast).